A 320-amino-acid polypeptide reads, in one-letter code: Cytochrome f (320 aa).

A signal peptide spans Met1–Ala35. Positions 36, 56, 59, and 60 each coordinate heme. A helical membrane pass occupies residues Val286–Lys306.

The protein belongs to the cytochrome f family. In terms of assembly, the 4 large subunits of the cytochrome b6-f complex are cytochrome b6, subunit IV (17 kDa polypeptide, petD), cytochrome f and the Rieske protein, while the 4 small subunits are PetG, PetL, PetM and PetN. The complex functions as a dimer. Heme serves as cofactor.

Its subcellular location is the plastid. The protein localises to the chloroplast thylakoid membrane. Component of the cytochrome b6-f complex, which mediates electron transfer between photosystem II (PSII) and photosystem I (PSI), cyclic electron flow around PSI, and state transitions. This Buxus microphylla (Littleleaf boxwood) protein is Cytochrome f.